The following is a 217-amino-acid chain: Ribonuclease T (217 aa).

Positions 20–194 (VVIDIETAGF…YDTQQTANLF (175 aa)) constitute an Exonuclease domain. Mg(2+) contacts are provided by Asp23, Glu25, His181, and Asp186. Residue His181 is the Proton donor/acceptor of the active site.

The protein belongs to the RNase T family. As to quaternary structure, homodimer. The cofactor is Mg(2+).

Trims short 3' overhangs of a variety of RNA species, leaving a one or two nucleotide 3' overhang. Responsible for the end-turnover of tRNA: specifically removes the terminal AMP residue from uncharged tRNA (tRNA-C-C-A). Also appears to be involved in tRNA biosynthesis. The sequence is that of Ribonuclease T from Buchnera aphidicola subsp. Baizongia pistaciae (strain Bp).